The chain runs to 246 residues: Small ribosomal subunit protein uS2 (246 aa).

Residues 225-246 (SKSSASVPNKDEYVAAEDGAAE) form a disordered region.

Belongs to the universal ribosomal protein uS2 family.

In Cellvibrio japonicus (strain Ueda107) (Pseudomonas fluorescens subsp. cellulosa), this protein is Small ribosomal subunit protein uS2.